Reading from the N-terminus, the 137-residue chain is Large ribosomal subunit protein uL16 (137 aa).

Over residues 1–17 the composition is skewed to basic residues; the sequence is MLQPKRTKFRKQQKGRN. Residues 1-21 are disordered; that stretch reads MLQPKRTKFRKQQKGRNRGQA.

Belongs to the universal ribosomal protein uL16 family. As to quaternary structure, part of the 50S ribosomal subunit.

Binds 23S rRNA and is also seen to make contacts with the A and possibly P site tRNAs. The chain is Large ribosomal subunit protein uL16 from Nitrosococcus oceani (strain ATCC 19707 / BCRC 17464 / JCM 30415 / NCIMB 11848 / C-107).